The following is a 1075-amino-acid chain: Nuclear factor of activated T-cells, cytoplasmic 3 (1075 aa).

An N-acetylthreonine modification is found at Thr-2. The segment at 18-37 (FGEDGAPAPPPPGSRPADLE) is disordered. The interval 109–114 (PSIQIT) is calcineurin-binding. The interval 205-306 (LGSPLTSPGG…PGHSPRGSVT (102 aa)) is disordered. A run of 2 repeats spans residues 207–223 (SPLT…PGEE) and 236–252 (SPRQ…VTDE). The tract at residues 207–308 (SPLTSPGGSP…HSPRGSVTED (102 aa)) is 3 X SP repeats. Residues 236-253 (SPRQSPCHSPRSSVTDEN) show a composition bias toward polar residues. Positions 256 to 270 (SPRPASGPSSRPTSP) are enriched in low complexity. The Nuclear localization signal signature appears at 273-275 (KRR). The stretch at 292 to 308 (SPVPSPGHSPRGSVTED) is repeat 3. Residues Ser-344 and Ser-372 each carry the phosphoserine modification. The RHD domain maps to 415–596 (SSLPPLDWPL…IPVECSQRSA (182 aa)). Residues 444-451 (RAHYETEG) mediate DNA binding. The Nuclear localization signal signature appears at 686–688 (KRK). 2 disordered regions span residues 711–739 (DLSS…SHDS) and 887–988 (SNTG…GLSA). Composition is skewed to polar residues over residues 724-739 (AQTQ…SHDS) and 887-912 (SNTG…QLQP). Composition is skewed to low complexity over residues 916 to 939 (GPSH…SSPL) and 949 to 967 (PMPY…SPAT). Positions 970–981 (HSGQHSTQAQST) are enriched in polar residues. Residues 1032-1041 (TLDDVNEIIG) carry the Nuclear export signal motif. Residues 1049 to 1075 (VSQGAGVSRQAPLPSPESLDLGRSDGL) are disordered. A phosphoserine mark is found at Ser-1063 and Ser-1066.

NFATC proteins bind to DNA as monomers. Member of the multicomponent NFATC transcription complex that consists of at least two components, a pre-existing cytoplasmic component NFATC2 and an inducible nuclear component NFATC1. Other members such as NFATC4, or members of the activating protein-1 family, MAF, GATA4 and Cbp/p300 can also bind the complex. Component of a promoter-binding complex composed of STAT3, NFATC3 and NFATC4; complex formation is enhanced by calcineurin. Interacts with TRIM17; this interaction prevents NFATC3 nuclear localization. Interacts with and ubiquitinated by STUB1/CHIP; HSPA1A/HSP70 is required as a co-chaperone. Post-translationally, ubiquitinated by STUB1/CHIP, leading to proteasomal degradation. In terms of processing, phosphorylated by NFATC-kinase; dephosphorylated by calcineurin. Predominantly expressed in thymus and is also found in peripheral blood leukocytes and kidney. As to expression, predominantly expressed in skeletal muscle. Also found weakly expressed in the thymus, kidney, testis, spleen, prostate, ovary, small intestine, heart, placenta and pancreas. In terms of tissue distribution, expressed in thymus and kidney. Expressed in thymus and skeletal muscle.

The protein localises to the cytoplasm. Its subcellular location is the nucleus. Its function is as follows. Acts as a regulator of transcriptional activation. Binds to the TNFSF11/RANKL promoter region and promotes TNFSF11 transcription. Binding to the TNFSF11 promoter region is increased by high levels of Ca(2+) which induce NFATC3 expression and may lead to regulation of TNFSF11 expression in osteoblasts. Plays a role in promoting mesenteric arterial wall remodeling in response to the intermittent hypoxia-induced increase in EDN1 and ROCK signaling. As a result NFATC3 colocalizes with F-actin filaments, translocates to the nucleus and promotes transcription of the smooth muscle hypertrophy and differentiation marker ACTA2. Promotes lipopolysaccharide-induced apoptosis and hypertrophy in cardiomyocytes. Following JAK/STAT signaling activation and as part of a complex with NFATC4 and STAT3, binds to the alpha-beta E4 promoter region of CRYAB and activates transcription in cardiomyocytes. In conjunction with NFATC4, involved in embryonic heart development via maintenance of cardiomyocyte survival, proliferation and differentiation. Plays a role in the inducible expression of cytokine genes in T-cells, especially in the induction of the IL-2. Required for thymocyte maturation during DN3 to DN4 transition and during positive selection. Positively regulates macrophage-derived polymicrobial clearance, via binding to the promoter region and promoting transcription of NOS2 resulting in subsequent generation of nitric oxide. Involved in Ca(2+)-mediated transcriptional responses upon Ca(2+) influx via ORAI1 CRAC channels. In Homo sapiens (Human), this protein is Nuclear factor of activated T-cells, cytoplasmic 3.